Reading from the N-terminus, the 389-residue chain is Dihydroorotase (389 aa).

2 residues coordinate Zn(2+): His-51 and His-53. Substrate contacts are provided by residues 53–55 (HVR) and Asn-85. Positions 133, 158, 192, and 254 each coordinate Zn(2+). An N6-carboxylysine modification is found at Lys-133. Asp-254 is an active-site residue. Substrate contacts are provided by residues His-258 and 272-273 (PG).

This sequence belongs to the metallo-dependent hydrolases superfamily. DHOase family. Class I DHOase subfamily. The cofactor is Zn(2+).

The catalysed reaction is (S)-dihydroorotate + H2O = N-carbamoyl-L-aspartate + H(+). Its pathway is pyrimidine metabolism; UMP biosynthesis via de novo pathway; (S)-dihydroorotate from bicarbonate: step 3/3. In terms of biological role, catalyzes the reversible cyclization of carbamoyl aspartate to dihydroorotate. The chain is Dihydroorotase from Sulfurisphaera tokodaii (strain DSM 16993 / JCM 10545 / NBRC 100140 / 7) (Sulfolobus tokodaii).